A 396-amino-acid chain; its full sequence is Ribosomal RNA large subunit methyltransferase I (396 aa).

One can recognise a PUA domain in the interval 2–81 (TVRLFLAKGR…EEINIEFFIR (80 aa)).

This sequence belongs to the methyltransferase superfamily. RlmI family.

It is found in the cytoplasm. The catalysed reaction is cytidine(1962) in 23S rRNA + S-adenosyl-L-methionine = 5-methylcytidine(1962) in 23S rRNA + S-adenosyl-L-homocysteine + H(+). Functionally, specifically methylates the cytosine at position 1962 (m5C1962) of 23S rRNA. The chain is Ribosomal RNA large subunit methyltransferase I from Serratia proteamaculans (strain 568).